The following is a 321-amino-acid chain: Putative ribose-phosphate pyrophosphokinase 2 (321 aa).

ATP is bound by residues 43 to 45 (DGE) and 102 to 103 (RQ). Residues H136 and D176 each coordinate Mg(2+). Position 225 (D225) interacts with D-ribose 5-phosphate.

This sequence belongs to the ribose-phosphate pyrophosphokinase family. Class I subfamily. In terms of assembly, homohexamer. It depends on Mg(2+) as a cofactor.

It is found in the cytoplasm. The enzyme catalyses D-ribose 5-phosphate + ATP = 5-phospho-alpha-D-ribose 1-diphosphate + AMP + H(+). It participates in metabolic intermediate biosynthesis; 5-phospho-alpha-D-ribose 1-diphosphate biosynthesis; 5-phospho-alpha-D-ribose 1-diphosphate from D-ribose 5-phosphate (route I): step 1/1. Involved in the biosynthesis of the central metabolite phospho-alpha-D-ribosyl-1-pyrophosphate (PRPP) via the transfer of pyrophosphoryl group from ATP to 1-hydroxyl of ribose-5-phosphate (Rib-5-P). In Lactiplantibacillus plantarum (strain ATCC BAA-793 / NCIMB 8826 / WCFS1) (Lactobacillus plantarum), this protein is Putative ribose-phosphate pyrophosphokinase 2.